A 260-amino-acid chain; its full sequence is Endonuclease NucS (260 aa).

Belongs to the NucS endonuclease family.

The protein localises to the cytoplasm. Functionally, cleaves both 3' and 5' ssDNA extremities of branched DNA structures. This is Endonuclease NucS from Methanopyrus kandleri (strain AV19 / DSM 6324 / JCM 9639 / NBRC 100938).